A 481-amino-acid chain; its full sequence is MEESVKRCRGFSDAREDLMSKLTDALISQVLFYLPTKEAVSTSVLSSRWKSVWLLIPDLDLNSSAFPSNNAFVGFIDKFIDFSKIENSCLHKLKLSIRKEHENDNKSCVTRWIGFVATHKLKHLDVECLLWKKKCLEVMPLTLYITQTLFYLRLHRVLLGNVESISLPCLKTMHLEQNVYANETCLEFFISSCPVLEDLSIVRKVDDNVKVLRVLSQTLTSLFVAFDYGEHRRGFHGYYSLDFGVLIDAPRLKYLKIGDDISRSKIVSNMDSLAKIEIVGLFYIERAFHNKVARNFFIGISRVRDMIISDRAMWFMSFYFLREESTPQFCNLSSLEVKISWSRGINLSMFLDNSPNLKSMVLVIYCKNLEKSVSFSSVPQCLLSSLEFVEIKISRFGIISLGIGIARFFVENSVVLKKLVVHSSRPMRKKSLVAFENLLALPRRSSMCQIISVVDAGSCGGENERCSLAADDAYLLEPSGR.

Residues 17–64 (DLMSKLTDALISQVLFYLPTKEAVSTSVLSSRWKSVWLLIPDLDLNSS) enclose the F-box domain. The region spanning 370–423 (EKSVSFSSVPQCLLSSLEFVEIKISRFGIISLGIGIARFFVENSVVLKKLVVHS) is the FBD domain.

The polypeptide is FBD-associated F-box protein At5g44490 (Arabidopsis thaliana (Mouse-ear cress)).